Consider the following 257-residue polypeptide: Hydroxyacylglutathione hydrolase (257 aa).

Positions 54, 56, 58, 59, 113, 137, and 175 each coordinate Zn(2+).

It belongs to the metallo-beta-lactamase superfamily. Glyoxalase II family. Monomer. Zn(2+) is required as a cofactor.

The enzyme catalyses an S-(2-hydroxyacyl)glutathione + H2O = a 2-hydroxy carboxylate + glutathione + H(+). It functions in the pathway secondary metabolite metabolism; methylglyoxal degradation; (R)-lactate from methylglyoxal: step 2/2. Thiolesterase that catalyzes the hydrolysis of S-D-lactoyl-glutathione to form glutathione and D-lactic acid. The protein is Hydroxyacylglutathione hydrolase of Synechocystis sp. (strain ATCC 27184 / PCC 6803 / Kazusa).